We begin with the raw amino-acid sequence, 882 residues long: MPEIAQAHTPMMRQYLETKARYPDAILFFRLGDFYEMFFEDALTASEALQITLTARSKGDDKVPMCGVPYHAARGYVARLLEKGFKVAICDQVEEPGKSQLVKREVTRVVTPGMVLDDQVLDPREASWLGAVALEDGRAGLALLDASTGQLQCGEVDGDERLVDELRRAGVRELVFSSAADGARTDAIARAAGAPAARRDAAEFDRAEDRLRKHLGVPSLDGFGVSGLPLGLAAAAAALAYLADTQRATPRHVDRISRLSTDDVLLLDEATRTNLELERTLSGGRKKGTLLALLDRTVTAPGGRRLAEWLRYPLTDLARIGARLDAVEELTGAAVAREELALALRPVADLERLLSRLVLGQGNARDLRALAGALLALPALAGVLEARGAARLREAGARLRGLEALAAHLDAAVAEEPPATLREGGFIRRGHSAELDEIVAIAEDGKGWIAAMEAKERERTGIGSLKVRFNKVFGYYLEVTKPNLHLVPKDWERRQTTVGGERFVTPELKTFEEKVLTAEERRAALEERLFEALRQAVAAEAPRVRTAADAVATADALLSLSRVAAERGYVRPEVDASEALEIVDGRHPVVEAVLPDGPAAYVPNDVLVASRGAPECGEHGALLVITGPNMAGKSTVMRQAALVVLLAQMGAFVPARRARIGLVDRIFTRVGASDDLARGRSTFMVEMTETAAILHNATRRSLVVLDEIGRGTSTFDGVSIAWAVAEHLHDVTGCRTLFATHYHELQDLARERPAVRNLTVAVREVGDRVVFLRKLVQGGASRSYGIEVAKLAGLPAEVLARAREILKNLEAMEVDEGGHPALARGRRRRAGPSAAQLGLFGGGAPADPAAEDVAKAIRAIDLDALRPLDALNLLAGWKKSLE.

An ATP-binding site is contributed by 627–634 (GPNMAGKS).

Belongs to the DNA mismatch repair MutS family.

Its function is as follows. This protein is involved in the repair of mismatches in DNA. It is possible that it carries out the mismatch recognition step. This protein has a weak ATPase activity. This chain is DNA mismatch repair protein MutS, found in Anaeromyxobacter dehalogenans (strain 2CP-1 / ATCC BAA-258).